The primary structure comprises 358 residues: UDP-N-acetylglucosamine--N-acetylmuramyl-(pentapeptide) pyrophosphoryl-undecaprenol N-acetylglucosamine transferase (358 aa).

Residues 11-13 (TGG), Asn120, Arg161, Ser188, and Gln282 each bind UDP-N-acetyl-alpha-D-glucosamine.

This sequence belongs to the glycosyltransferase 28 family. MurG subfamily.

The protein localises to the cell inner membrane. It catalyses the reaction di-trans,octa-cis-undecaprenyl diphospho-N-acetyl-alpha-D-muramoyl-L-alanyl-D-glutamyl-meso-2,6-diaminopimeloyl-D-alanyl-D-alanine + UDP-N-acetyl-alpha-D-glucosamine = di-trans,octa-cis-undecaprenyl diphospho-[N-acetyl-alpha-D-glucosaminyl-(1-&gt;4)]-N-acetyl-alpha-D-muramoyl-L-alanyl-D-glutamyl-meso-2,6-diaminopimeloyl-D-alanyl-D-alanine + UDP + H(+). Its pathway is cell wall biogenesis; peptidoglycan biosynthesis. Functionally, cell wall formation. Catalyzes the transfer of a GlcNAc subunit on undecaprenyl-pyrophosphoryl-MurNAc-pentapeptide (lipid intermediate I) to form undecaprenyl-pyrophosphoryl-MurNAc-(pentapeptide)GlcNAc (lipid intermediate II). This is UDP-N-acetylglucosamine--N-acetylmuramyl-(pentapeptide) pyrophosphoryl-undecaprenol N-acetylglucosamine transferase from Synechococcus sp. (strain CC9605).